The chain runs to 296 residues: Nucleotide-binding protein Spy49_0545 (296 aa).

13–20 contributes to the ATP binding site; that stretch reads GMSGAGKT. Residue 63–66 participates in GTP binding; the sequence is DMRS.

It belongs to the RapZ-like family.

Functionally, displays ATPase and GTPase activities. This Streptococcus pyogenes serotype M49 (strain NZ131) protein is Nucleotide-binding protein Spy49_0545.